We begin with the raw amino-acid sequence, 352 residues long: Photosystem II protein D1 (352 aa).

Residue T2 is modified to N-acetylthreonine. A Phosphothreonine modification is found at T2. 3 helical membrane passes run 29-46, 118-133, and 142-156; these read YIGWFGVIMIPCLLTATS, HFLLGVYCYMGREWEL, and WIAVAYSAPVAAASA. H118 is a binding site for chlorophyll a. Y126 provides a ligand contact to pheophytin a. Positions 170 and 189 each coordinate [CaMn4O5] cluster. A helical transmembrane segment spans residues 197 to 218; the sequence is FHMLGVAGVFGGSLFSAMHGSL. H198 lines the chlorophyll a pocket. A quinone-binding positions include H215 and 264–265; that span reads SF. H215 lines the Fe cation pocket. Residue H272 participates in Fe cation binding. A helical membrane pass occupies residues 274–288; that stretch reads FLAAWPVIGIWFTAL. [CaMn4O5] cluster contacts are provided by H332, E333, D342, and A344. Residues 345–352 constitute a propeptide that is removed on maturation; the sequence is STNSSSNN.

The protein belongs to the reaction center PufL/M/PsbA/D family. As to quaternary structure, PSII is composed of 1 copy each of membrane proteins PsbA, PsbB, PsbC, PsbD, PsbE, PsbF, PsbH, PsbI, PsbJ, PsbK, PsbL, PsbM, PsbT, PsbX, PsbY, PsbZ, Psb30/Ycf12, at least 3 peripheral proteins of the oxygen-evolving complex and a large number of cofactors. It forms dimeric complexes. It depends on The D1/D2 heterodimer binds P680, chlorophylls that are the primary electron donor of PSII, and subsequent electron acceptors. It shares a non-heme iron and each subunit binds pheophytin, quinone, additional chlorophylls, carotenoids and lipids. D1 provides most of the ligands for the Mn4-Ca-O5 cluster of the oxygen-evolving complex (OEC). There is also a Cl(-1) ion associated with D1 and D2, which is required for oxygen evolution. The PSII complex binds additional chlorophylls, carotenoids and specific lipids. as a cofactor. Post-translationally, tyr-161 forms a radical intermediate that is referred to as redox-active TyrZ, YZ or Y-Z. C-terminally processed by CTPA; processing is essential to allow assembly of the oxygen-evolving complex and thus photosynthetic growth.

The protein resides in the plastid. It is found in the chloroplast thylakoid membrane. The catalysed reaction is 2 a plastoquinone + 4 hnu + 2 H2O = 2 a plastoquinol + O2. Its function is as follows. This is one of the two reaction center proteins of photosystem II. In terms of biological role, photosystem II (PSII) is a light-driven water:plastoquinone oxidoreductase that uses light energy to abstract electrons from H(2)O, generating O(2) and a proton gradient subsequently used for ATP formation. It consists of a core antenna complex that captures photons, and an electron transfer chain that converts photonic excitation into a charge separation. The D1/D2 (PsbA/PsbD) reaction center heterodimer binds P680, the primary electron donor of PSII as well as several subsequent electron acceptors. This chain is Photosystem II protein D1, found in Chlamydomonas reinhardtii (Chlamydomonas smithii).